The sequence spans 233 residues: Esterase FUS5 (233 aa).

Catalysis depends on charge relay system residues serine 105, aspartate 159, and histidine 187.

It belongs to the LovG family.

Functionally, esterase; part of the gene cluster that mediates the biosynthesis of the mycotoxin fusarin C. Within the cluster, FUS1, FUS2, FUS8 and FUS9 are sufficient for fusarin production. The other FUS cluster members are not essential for fusarin C biosynthesis. The chain is Esterase FUS5 from Gibberella moniliformis (strain M3125 / FGSC 7600) (Maize ear and stalk rot fungus).